A 438-amino-acid chain; its full sequence is Transposon Ty2-F Gag polyprotein (438 aa).

Polar residues-rich tracts occupy residues 1 to 11 (MESQQLHQNPH), 19 to 39 (ASVTSKEVPSNQDPLAVSASN), and 49 to 60 (KVNSQQETTPGT). Disordered stretches follow at residues 1 to 86 (MESQ…GQYQ), 366 to 397 (VSRTSPNTTNTKVTTRNYHRTNSSKPRAAKAH), and 419 to 438 (SSQYLSDDNELSLRPATERI). The segment at 295–397 (ENNINVSDRL…SSKPRAAKAH (103 aa)) is RNA-binding. The segment covering 369–381 (TSPNTTNTKVTTR) has biased composition (low complexity).

In terms of assembly, homotrimer.

The protein resides in the cytoplasm. In terms of biological role, capsid protein (CA) is the structural component of the virus-like particle (VLP), forming the shell that encapsulates the retrotransposons dimeric RNA genome. The particles are assembled from trimer-clustered units and there are holes in the capsid shells that allow for the diffusion of macromolecules. CA also has nucleocapsid-like chaperone activity, promoting primer tRNA(i)-Met annealing to the multipartite primer-binding site (PBS), dimerization of Ty2 RNA and initiation of reverse transcription. The polypeptide is Transposon Ty2-F Gag polyprotein (TY2A-F) (Saccharomyces cerevisiae (strain ATCC 204508 / S288c) (Baker's yeast)).